Here is a 392-residue protein sequence, read N- to C-terminus: Immunoglobulin-binding protein EibA (392 aa).

The N-terminal stretch at Met-1–Ala-27 is a signal peptide. The segment at Ala-28–Gln-301 is surface exposed passenger domain. The Extracellular segment spans residues Ala-28–Lys-341. Positions Glu-174–Lys-215 form a coiled coil. The tract at residues Ala-187–Arg-230 is right-handed coiled-coil (RHcc). Residues Thr-231–Gly-256 are saddle domain. The segment at Leu-257–Arg-322 is left-handed coiled-coil (LHcc). Residues Leu-299–Lys-341 are outer membrane translocation of the passenger domain. 4 beta stranded membrane-spanning segments follow: residues Phe-342–Ser-352, Gln-355–Asn-366, Thr-369–Ser-378, and Ala-382–Phe-392. A translocator domain region spans residues Phe-342–Phe-392.

Belongs to the autotransporter-2 (AT-2) (TC 1.B.40) family. Eib subfamily. As to quaternary structure, homotrimer; can probably form mixed heterotrimers in vivo. Will form mixed heterotrimers with EibD; these are correctly located in the outer membrane and bind IgG Fc, although less well than homotrimers. Does not form trimers with distantly related YadA from Y.enterocolitica; coexpression was lethal and one of the genes is eliminated in vivo. If the full translocator domain (299-392) is exchanged with that of YadA ('368-455'), will form heterotrimers with YadA and vice-versa. In denaturing gels runs as 2 bands of about 121 and 131 kDa; extracting the sample with 88% phenol at 70 degrees Celsius reduces part of the signal to about 45 kDa. Binds the Fc portion of IgG; binds more than 1 Fc per subunit.

Its subcellular location is the cell surface. The protein resides in the cell outer membrane. In terms of biological role, binds (in a non-immune fashion) to the Fc portion of human IgG but not IgA; binding occurs on the cell surface. Confers the ability to survive exposure to human serum exposure. Binds to the Fc portion of human IgG and to whole mouse antibodies also via Fc, binds more than 1 Fc or IgG. The protein is Immunoglobulin-binding protein EibA of Escherichia coli.